Here is a 125-residue protein sequence, read N- to C-terminus: TSSK6-activating co-chaperone protein (125 aa).

Disordered regions lie at residues 1–21 and 97–125; these read MEQHTSHPNRKVPAKEEANAV and LAPGRGSNNSSLPALSPNPLLNHLPQFSK. Residues 103-125 show a composition bias toward low complexity; sequence SNNSSLPALSPNPLLNHLPQFSK.

Belongs to the TSACC family. As to quaternary structure, interacts with HSP70. Associates with HSP90. Interacts with TSSK6; this interaction is direct and recruits TSACC to HSP90.

In terms of biological role, co-chaperone that facilitates HSP-mediated activation of TSSK6. This is TSSK6-activating co-chaperone protein (TSACC) from Macaca fascicularis (Crab-eating macaque).